Here is a 713-residue protein sequence, read N- to C-terminus: MVLNKVTYKINAYKIKEEFIPKEVHFYRIKSFVNEAFNFYRFVNFYGGMIINKKDKSFVLPYKVDNKVLKYKDGNNEIPIDIEYIKSLKLEYVKPEIAEKLVRGYLKSVHKIEPELSRIIKNIRKHKVVENIKVESYCEYEVKKHDGDYYLILNFRHTASITKHLWDFVNRDKALLEEYVGKKIIFKPNPKVRYTISLVDAPNPQKIEEIMSHIIKYYKWSEDMVKSTFGEIDYNQPIMYCEEILEPFAPQFCNLVFYMDELDSYILKELQSYWRLSNENKGKIINEIAKKLRFIDNTPKELEFMKFNNTPLLVKDVNKNPTKIYSTNTLFTWIYNQNAKIYLPYDVPEIIRNKNLLTYILIDEEIKDELKAIKDKVNKMFRNYNKIANKTELPKFNYANRWKYFSTDDIRGIIKEIKSEFNDEICFALIIGKEKYKDNDYYEILKKQLFDLKIISQNILWENWRKDDKGYMTNNLLIQIMGKLGIKYFILDSKTPYDYIMGLDTGLGIFGNHRVGGCTVVYDSEGKIRRIQPIETPAPGERLHLPYVIEYLENKANIDMENKNILFLRDGFIQNSERNDLKEISKELNSNIEVISIRKNNKYKVFTSDYRIGSVFGNDGIFLPHKTPFGSNPVKLSTWLRFNCGNEEGLKINESIMQLLYDLTKMNYSALYGEGRYLRIPAPIHYADKFVKALGKNWKIDEELLKHGFLYFI.

The segment at 18–129 is N-terminal domain; it reads EFIPKEVHFY…IKNIRKHKVV (112 aa). The PAZ domain maps to 164–257; it reads HLWDFVNRDK…FAPQFCNLVF (94 aa). The binds 3'-end of gDNA stretch occupies residues 213 to 218; the sequence is HIIKYY. The tract at residues 346–488 is mid domain; it reads DVPEIIRNKN…QIMGKLGIKY (143 aa). The Piwi domain maps to 426 to 699; that stretch reads CFALIIGKEK…FVKALGKNWK (274 aa). The a divalent metal cation site is built by Q457, Q479, and K483. A binds 5'-phosphorylated end of gDNA region spans residues 457–460; the sequence is QNIL. Catalysis depends on residues D504, E541, and D570. D504 serves as a coordination point for Mn(2+). D570 provides a ligand contact to Mn(2+). Binds 5'-phosphorylated end of gDNA stretches follow at residues 625 to 632 and 678 to 679; these read HKTPFGSN and LR. Residue D688 is part of the active site. Residues D688 and I713 each contribute to the Mn(2+) site.

Belongs to the argonaute family. Long pAgo subfamily. The cofactor is a divalent metal cation.

DNA cleavage is inhibited by EDTA. Functionally, a DNA-guided ssDNA endonuclease that may play a role in defense against invading genetic elements. Uses short ssDNA sequences as guides (gDNA) to bind complementary target strands, resulting in slicing of the target DNA (tDNA). Endonucleolytically cleaves tDNA (the gDNA indicates where to cleave); two major and two minor products are seen which correspond to cleavage sites between nucleotides 9/10, 10/11, 13/14, and 14/15 downstream of the target residue base-paired with the 5'-end of the gDNA. Efficient guide-dependent tDNA cleavage requires a minimal length of 15 bp and is maximal at 19 bp. Prefers gDNA with 5'-phosphorylated purines and 3'-pyrimidines; changing these bases alters the cleavage activity and patterns. Also has guide-independent activity on tDNA called 'chopping'. Probably a first round of guide-independent activity on an invading plasmid or virus would generate guide DNAs for subsequent, more efficient, guide-dependent degradation of invading nucleic acids. Has no activity on substrate with a mismatch at positions 10 and 11, on ssDNA or RNA, nor on DNA:RNA hybrids. Digests longer (750 bp) dsDNA as well as circular plasmid and naked genomic DNA, but not chromatin, in a guide DNA-independent manner. Addition of endogenous histone A3 protects DNA from cleavage, while cleavage is insensitive to methylation. When plasmid encoding active or mutated protein (Ala-541) is transformed into Sulfolobus acidocaldarius about 25-fold fewer transformants are found with active protein; reduced levels of plasmid are found in wild-type transformed cells. While S.acidocaldarius grows at a similar temperature to M.jannaschii (70 to 80 degrees Celsius) it has very different histone-like proteins, which presumably do not protect against MjAgo. Binds ssDNA, dsDNA and DNA-RNA hybrids; binding is most efficient with dsDNA. The sequence is that of Protein argonaute from Methanocaldococcus jannaschii (strain ATCC 43067 / DSM 2661 / JAL-1 / JCM 10045 / NBRC 100440) (Methanococcus jannaschii).